Here is a 4062-residue protein sequence, read N- to C-terminus: Transcription-associated protein 1 (4062 aa).

Residues 531 to 562 (LASEPSTSEDADESGGDPNKLPPPTKEGKKTS) are disordered. TPR repeat units lie at residues 1346–1379 (LDGV…LLDI) and 1677–1714 (RRSF…DDEE). The span at 2659-2670 (VETEMKREEPEP) shows a compositional bias: basic and acidic residues. The interval 2659 to 2692 (VETEMKREEPEPMEVDEKDSQDDSKDAGEPKEKE) is disordered. Residues 2671–2680 (MEVDEKDSQD) are compositionally biased toward acidic residues. A compositionally biased stretch (basic and acidic residues) spans 2681 to 2692 (DSKDAGEPKEKE). The region spanning 2800-3411 (LIEFISSKHE…FYHIREAVSV (612 aa)) is the FAT domain. The stretch at 2847 to 2880 (IETLESLGTLYNEISEFDQFAAIWERRAVFPDTM) is one TPR 3 repeat. Positions 3682 to 4046 (EPNFEIVIKG…DCVSLISRAK (365 aa)) constitute a PI3K/PI4K catalytic domain. A G-loop region spans residues 3688 to 3694 (VIKGGQV). A catalytic loop region spans residues 3902–3910 (NLTPMGPDQ). The segment at 3922–3950 (NPSYRFEIRGGRSLHDIQHFGHEVPFRLT) is activation loop. Residues 4031–4062 (AKLRKDDCVSLISRAKDSDNLARMPPTYHAWF) form the FATC domain.

It belongs to the PI3/PI4-kinase family. TRA1 subfamily. As to quaternary structure, interacts with histone acetyltransferase Tip60 homolog mys-1. Probably a component of a complex with histone acetyltransferase (HAT) activity, at least composed of mys-1 and trr-1. As to expression, expressed in germ cells and somatic cells.

Its subcellular location is the nucleus. The protein resides in the chromosome. Its function is as follows. Influences germ cell fate in hermaphrodites. Acts downstream of tra-2 and tra-3 and through the Tip60 histone acetyltransferase complex to regulate germ cell fate decisions. Required for spermatogenesis and embryonic development. Acts with tra-2 to promote expression of fog-3 and control male tail development. Involved in the negative regulation of vulval development. Involved in the positive regulation of transcription factor daf-16, probably acting by histone acetylation; thereby modulating stress resistance. Plays a role in acetylation of nucleosomal histone H4, probably acting as a component of the Tip60 histone acetyltransferase complex. This Caenorhabditis elegans protein is Transcription-associated protein 1.